We begin with the raw amino-acid sequence, 367 residues long: tRNA/tmRNA (uracil-C(5))-methyltransferase (367 aa).

5 residues coordinate S-adenosyl-L-methionine: Q190, Y218, N223, E239, and D299. The active-site Nucleophile is C324. E358 acts as the Proton acceptor in catalysis.

This sequence belongs to the class I-like SAM-binding methyltransferase superfamily. RNA M5U methyltransferase family. TrmA subfamily.

It catalyses the reaction uridine(54) in tRNA + S-adenosyl-L-methionine = 5-methyluridine(54) in tRNA + S-adenosyl-L-homocysteine + H(+). It carries out the reaction uridine(341) in tmRNA + S-adenosyl-L-methionine = 5-methyluridine(341) in tmRNA + S-adenosyl-L-homocysteine + H(+). Functionally, dual-specificity methyltransferase that catalyzes the formation of 5-methyluridine at position 54 (m5U54) in all tRNAs, and that of position 341 (m5U341) in tmRNA (transfer-mRNA). The polypeptide is tRNA/tmRNA (uracil-C(5))-methyltransferase (Pectobacterium carotovorum subsp. carotovorum (strain PC1)).